A 488-amino-acid polypeptide reads, in one-letter code: (S)-canadine synthase CYP719A21 (488 aa).

The helical transmembrane segment at 6-26 (LWILTLISTILAVFAAVLIIF) threads the bilayer. Position 432 (Cys432) interacts with heme.

This sequence belongs to the cytochrome P450 family. Requires heme as cofactor.

It is found in the membrane. It carries out the reaction (S)-tetrahydrocolumbamine + reduced [NADPH--hemoprotein reductase] + O2 = (S)-canadine + oxidized [NADPH--hemoprotein reductase] + 2 H2O + H(+). It participates in alkaloid biosynthesis. Functionally, cytochrome P450 involved in the biosynthesis of the benzylisoquinoline alkaloid noscapine. Converts (S)-tetrahydrocolumbamine to (S)-canadine. In Papaver somniferum (Opium poppy), this protein is (S)-canadine synthase CYP719A21.